The following is a 622-amino-acid chain: Putative E3 ubiquitin-protein ligase ORTHRUS 4 (622 aa).

A PHD-type zinc finger spans residues 12-62 (DGVCMRCQVTPPSEETLTCGTCVTPWHVSCLLPESLASSTGDWECPDCSGV). The segment at 129 to 169 (CSICIQLPERPVTTPCGHNFCLKCFEKWAVGQGKLTCMICR) adopts an RING-type 1 zinc-finger fold. The 150-residue stretch at 258–407 (TRNQGVLVGE…HKMCRYLFVR (150 aa)) folds into the YDG domain. An RING-type 2 zinc finger spans residues 498–555 (CQICRKVLSLPVTTPCAHNFCKACLEAKFAGITQLRDRSNGVRKLRAKKNIMTCPCCT). A coiled-coil region spans residues 566 to 602 (QVNREMMEIIENFKKSEEEAEVAESSNISEEEEEESE). Residues 579–622 (KKSEEEAEVAESSNISEEEEEESEPPTKKIKMDNNSVGDTSLSA) are disordered. Residues 611-622 (DNNSVGDTSLSA) show a composition bias toward polar residues.

The protein resides in the nucleus. The catalysed reaction is S-ubiquitinyl-[E2 ubiquitin-conjugating enzyme]-L-cysteine + [acceptor protein]-L-lysine = [E2 ubiquitin-conjugating enzyme]-L-cysteine + N(6)-ubiquitinyl-[acceptor protein]-L-lysine.. It functions in the pathway protein modification; protein ubiquitination. Functionally, E3 ubiquitin-protein ligase. May participate in CpG methylation-dependent transcriptional regulation. The protein is Putative E3 ubiquitin-protein ligase ORTHRUS 4 (ORTH4) of Arabidopsis thaliana (Mouse-ear cress).